Consider the following 306-residue polypeptide: N-acetylmuramic acid 6-phosphate etherase (306 aa).

One can recognise an SIS domain in the interval 59-222 (ISEALRQGGR…STGAMVQLGK (164 aa)). Catalysis depends on Glu-87, which acts as the Proton donor. The active site involves Glu-118.

This sequence belongs to the GCKR-like family. MurNAc-6-P etherase subfamily. As to quaternary structure, homodimer.

The catalysed reaction is N-acetyl-D-muramate 6-phosphate + H2O = N-acetyl-D-glucosamine 6-phosphate + (R)-lactate. Its pathway is amino-sugar metabolism; N-acetylmuramate degradation. Its function is as follows. Specifically catalyzes the cleavage of the D-lactyl ether substituent of MurNAc 6-phosphate, producing GlcNAc 6-phosphate and D-lactate. The chain is N-acetylmuramic acid 6-phosphate etherase from Gloeothece citriformis (strain PCC 7424) (Cyanothece sp. (strain PCC 7424)).